We begin with the raw amino-acid sequence, 92 residues long: MKLLLAIALMLTIVMWVSTQQPQAVHTYCGRHLARTLADLCWEAGVDKRSDAQYASYGSAWLMPYSEGRGKRGIVDECCLRPCSVDVLLSYC.

An N-terminal signal peptide occupies residues 1-19 (MKLLLAIALMLTIVMWVST). A Pyrrolidone carboxylic acid modification is found at Gln-20. Cystine bridges form between Cys-29–Cys-79, Cys-41–Cys-92, and Cys-78–Cys-83. The propeptide at 50 to 70 (SDAQYASYGSAWLMPYSEGRG) is c peptide like.

This sequence belongs to the insulin family. As to quaternary structure, heterodimer of a B chain and an A chain linked by two disulfide bonds.

The protein resides in the secreted. In terms of biological role, brain peptide responsible for activation of prothoracic glands to produce ecdysone in insects. The protein is Bombyxin A-7 (BBXA7) of Bombyx mori (Silk moth).